Here is a 607-residue protein sequence, read N- to C-terminus: NADH-ubiquinone oxidoreductase chain 5 (607 aa).

16 helical membrane passes run 3-23 (IFTTSILLIFILLLSPILISM), 35-55 (YTTTSIKFSFIISLLPLLMFF), 84-104 (FFSILFTSVALFVTWSIMQFS), 117-137 (FIKYLTLFLITMLILTSANNM), 140-160 (LFIGWEGVGIMSFLLIGWWYG), 171-191 (AILYNRIGDIGFILAMVWFSL), 210-230 (LIPLMGLLIAATGKSAQFGLH), 241-261 (TPVSALLHSSTMVVAGIFLLV), 272-292 (FILTTMLCLGALTTLFTAICA), 301-320 (IIAFSTSSQLGLMMVTLGMN), 324-344 (LAFLHICTHAFFKAMLFMCSG), 365-385 (IMPFTSSCLVIGSLALTGMPF), 405-427 (NAWALLITLIATSMTAMYSMRII), 457-477 (LAFGSIFAGFVISYNIPPTSI), 482-502 (MPWFLKTTALIISVLGFLIAL), and 586-606 (LYFMSFLINIILIIILYSINL).

This sequence belongs to the complex I subunit 5 family. As to quaternary structure, core subunit of respiratory chain NADH dehydrogenase (Complex I) which is composed of 45 different subunits.

Its subcellular location is the mitochondrion inner membrane. It carries out the reaction a ubiquinone + NADH + 5 H(+)(in) = a ubiquinol + NAD(+) + 4 H(+)(out). In terms of biological role, core subunit of the mitochondrial membrane respiratory chain NADH dehydrogenase (Complex I) which catalyzes electron transfer from NADH through the respiratory chain, using ubiquinone as an electron acceptor. Essential for the catalytic activity and assembly of complex I. The chain is NADH-ubiquinone oxidoreductase chain 5 (Mtnd5) from Mus musculus (Mouse).